The primary structure comprises 307 residues: tRNA dimethylallyltransferase (307 aa).

9-16 is an ATP binding site; sequence GPTAIGKT. 11–16 lines the substrate pocket; it reads TAIGKT. 2 interaction with substrate tRNA regions span residues 34–37 and 164–168; these read DSRQ and QRMMR.

Belongs to the IPP transferase family. Monomer. It depends on Mg(2+) as a cofactor.

The enzyme catalyses adenosine(37) in tRNA + dimethylallyl diphosphate = N(6)-dimethylallyladenosine(37) in tRNA + diphosphate. Its function is as follows. Catalyzes the transfer of a dimethylallyl group onto the adenine at position 37 in tRNAs that read codons beginning with uridine, leading to the formation of N6-(dimethylallyl)adenosine (i(6)A). The chain is tRNA dimethylallyltransferase from Flavobacterium psychrophilum (strain ATCC 49511 / DSM 21280 / CIP 103535 / JIP02/86).